We begin with the raw amino-acid sequence, 289 residues long: Glycine--tRNA ligase alpha subunit (289 aa).

This sequence belongs to the class-II aminoacyl-tRNA synthetase family. In terms of assembly, tetramer of two alpha and two beta subunits.

The protein localises to the cytoplasm. It catalyses the reaction tRNA(Gly) + glycine + ATP = glycyl-tRNA(Gly) + AMP + diphosphate. This is Glycine--tRNA ligase alpha subunit from Nitratidesulfovibrio vulgaris (strain ATCC 29579 / DSM 644 / CCUG 34227 / NCIMB 8303 / VKM B-1760 / Hildenborough) (Desulfovibrio vulgaris).